A 557-amino-acid chain; its full sequence is Prosaposin (557 aa).

An N-terminal signal peptide occupies residues 1–16; sequence MYALALFASLLATALT. Residues 17–59 constitute a propeptide that is removed on maturation; sequence SPVQDPKTCSGGSAVLCRDVKTAVDCGAVKHCQQMVWSKPTAK. One can recognise a Saposin A-type 1 domain in the interval 18 to 58; it reads PVQDPKTCSGGSAVLCRDVKTAVDCGAVKHCQQMVWSKPTA. Saposin B-type domains lie at 59–142, 193–277, 313–394, and 438–519; these read KSLP…QSLQ, NEDV…NEVK, NVIL…AARP, and NGGF…PSAY. 3 disulfides stabilise this stretch: C63–C138, C66–C132, and C94–C106. N80 carries an N-linked (GlcNAc...) asparagine glycan. Positions 143-193 are excised as a propeptide; that stretch reads EYLAEQNQKQLESNKIPEVDMARVVAPFMSNIPLLLYPQDHPRSQPQPKAN. Cystine bridges form between C197-C273, C200-C267, and C229-C240. A glycan (N-linked (GlcNAc...) asparagine) is linked at N214. The propeptide occupies 277–312; it reads KRVPMKTLVPATETIKNILPALEMMDPYEQNLVQAH. 3 disulfide bridges follow: C317-C390, C320-C384, and C348-C359. N334 is a glycosylation site (N-linked (GlcNAc...) asparagine). A propeptide spanning residues 393 to 437 is cleaved from the precursor; it reads RPELVEALEQPAPAIVSALLKEPTPPKQPAQPKQSALPAHVPPQK. Intrachain disulfides connect C442–C515, C445–C509, and C473–C484. N459 carries an N-linked (GlcNAc...) asparagine glycan. Residues 520–557 constitute a propeptide that is removed on maturation; the sequence is KLLLGTEKCVWGPSYWCQNMETAARCNAVDHCKRHVWN. Positions 521–557 constitute a Saposin A-type 2 domain; the sequence is LLLGTEKCVWGPSYWCQNMETAARCNAVDHCKRHVWN.

As to quaternary structure, saposin-B is a homodimer. Prosaposin exists as a roughly half-half mixture of monomers and disulfide-linked dimers. Monomeric prosaposin interacts (via C-terminus) with sortilin/SORT1, the interaction is required for targeting to lysosomes. Interacts with GRN; facilitates lysosomal delivery of progranulin from the extracellular space and the biosynthetic pathway.

It localises to the secreted. Its subcellular location is the lysosome. Behaves as a myelinotrophic and neurotrophic factor, these effects are mediated by its G-protein-coupled receptors, GPR37 and GPR37L1, undergoing ligand-mediated internalization followed by ERK phosphorylation signaling. In terms of biological role, saposin-A and saposin-C stimulate the hydrolysis of glucosylceramide by beta-glucosylceramidase (EC 3.2.1.45) and galactosylceramide by beta-galactosylceramidase (EC 3.2.1.46). Saposin-C apparently acts by combining with the enzyme and acidic lipid to form an activated complex, rather than by solubilizing the substrate. Its function is as follows. Saposin-B stimulates the hydrolysis of galacto-cerebroside sulfate by arylsulfatase A (EC 3.1.6.8), GM1 gangliosides by beta-galactosidase (EC 3.2.1.23) and globotriaosylceramide by alpha-galactosidase A (EC 3.2.1.22). Saposin-B forms a solubilizing complex with the substrates of the sphingolipid hydrolases. Functionally, saposin-D is a specific sphingomyelin phosphodiesterase activator (EC 3.1.4.12). Saposins are specific low-molecular mass non-enzymatic proteins, they participate in the lysosomal degradation of sphingolipids, which takes place by the sequential action of specific hydrolases. The chain is Prosaposin (Psap) from Mus musculus (Mouse).